A 357-amino-acid chain; its full sequence is Protein FAM118A (357 aa).

Residue Met1 is modified to N-acetylmethionine. Residues Leu30 to Ile46 traverse the membrane as a helical segment. Position 311 is a phosphoserine (Ser311).

This sequence belongs to the FAM118 family.

The protein localises to the membrane. This is Protein FAM118A (Fam118a) from Mus musculus (Mouse).